A 324-amino-acid polypeptide reads, in one-letter code: Succinylglutamate desuccinylase (324 aa).

The Zn(2+) site is built by histidine 53, glutamate 56, and histidine 148. Residue glutamate 211 is part of the active site.

This sequence belongs to the AspA/AstE family. Succinylglutamate desuccinylase subfamily. Zn(2+) is required as a cofactor.

The catalysed reaction is N-succinyl-L-glutamate + H2O = L-glutamate + succinate. The protein operates within amino-acid degradation; L-arginine degradation via AST pathway; L-glutamate and succinate from L-arginine: step 5/5. Its function is as follows. Transforms N(2)-succinylglutamate into succinate and glutamate. This is Succinylglutamate desuccinylase from Acinetobacter baumannii (strain SDF).